The chain runs to 584 residues: AP-1-like transcription factor yap1 (584 aa).

The tract at residues 23-179 is disordered; that stretch reads LAALSSNQPP…AFRERKEKHL (157 aa). A Bipartite nuclear localization signal motif is present at residues 35–42; it reads QQNDKQRS. The segment covering 36-48 has biased composition (basic and acidic residues); the sequence is QNDKQRSQAKTDP. Residues 52-67 are compositionally biased toward low complexity; sequence PGNMSSGSFSMSPGFN. The Bipartite nuclear localization signal signature appears at 68 to 75; sequence KTHPGSGG. Acidic residues predominate over residues 79–94; the sequence is GDDESPFLDFNPELDF. 2 stretches are compositionally biased toward basic and acidic residues: residues 112–144 and 170–179; these read SEEHEVGEKRKDMSDNENEESGKKRRESDDKAA and AFRERKEKHL. The bZIP domain maps to 154–217; sequence SEPTSKRKAQ…ERLQVELREY (64 aa). A basic motif region spans residues 159–180; it reads KRKAQNRAAQRAFRERKEKHLK. The segment at 182-189 is leucine-zipper; sequence LETKVDEL. Residues 211–332 are transcription activation 1; sequence QVELREYRKR…PSPKVPSVYN (122 aa). 2 disordered regions span residues 267 to 379 and 418 to 441; these read IFNG…TKLN and RGKSESVSNTPSQPNNNYEQTPGP. The segment at 284–296 is n-CRD; it reads SSPATSDSQVPGV. The segment covering 300–309 has biased composition (polar residues); sequence ETLNGSNNRG. Positions 336–362 are enriched in low complexity; sequence SASSHDSSNSCSPSSSSDSHQSQMLSS. Composition is skewed to polar residues over residues 363–379 and 422–437; these read NGTSPEPSSNSPATKLN and ESVSNTPSQPNNNYEQ. The segment at 377-480 is transcription activation 2; sequence KLNDSVQNHH…SQDFGTFFDD (104 aa). Disulfide bonds link Cys531–Cys555, Cys531–Cys564, and Cys555–Cys564. The c-CRD stretch occupies residues 531 to 564; sequence CTKIWDRLQSMEKFRNGEIDVDNLCSELRTKARC. A Nuclear export signal motif is present at residues 549-556; sequence IDVDNLCS.

Belongs to the bZIP family. YAP subfamily. Post-translationally, depending on the oxidative stress inducing agent, yap1 can undergo two distinct conformational changes, both involving disulfide bond formation, and both masking the nuclear export signal, thus abolishing nuclear export.

The protein localises to the nucleus. It is found in the cytoplasm. Transcription activator involved in oxidative stress response and redox homeostasis. Regulates the transcription of genes encoding antioxidant enzymes and components of the cellular thiol-reducing pathways. May be involved in antifungal resistance to voriconazole. In Aspergillus flavus (strain ATCC 200026 / FGSC A1120 / IAM 13836 / NRRL 3357 / JCM 12722 / SRRC 167), this protein is AP-1-like transcription factor yap1.